The sequence spans 146 residues: D-aminoacyl-tRNA deacylase (146 aa).

The Gly-cisPro motif, important for rejection of L-amino acids motif lies at 137–138 (GP).

This sequence belongs to the DTD family. As to quaternary structure, homodimer.

Its subcellular location is the cytoplasm. The catalysed reaction is glycyl-tRNA(Ala) + H2O = tRNA(Ala) + glycine + H(+). It catalyses the reaction a D-aminoacyl-tRNA + H2O = a tRNA + a D-alpha-amino acid + H(+). Functionally, an aminoacyl-tRNA editing enzyme that deacylates mischarged D-aminoacyl-tRNAs. Also deacylates mischarged glycyl-tRNA(Ala), protecting cells against glycine mischarging by AlaRS. Acts via tRNA-based rather than protein-based catalysis; rejects L-amino acids rather than detecting D-amino acids in the active site. By recycling D-aminoacyl-tRNA to D-amino acids and free tRNA molecules, this enzyme counteracts the toxicity associated with the formation of D-aminoacyl-tRNA entities in vivo and helps enforce protein L-homochirality. The polypeptide is D-aminoacyl-tRNA deacylase (Bacillus cereus (strain B4264)).